We begin with the raw amino-acid sequence, 72 residues long: Translation initiation factor IF-1 (72 aa).

An S1-like domain is found at methionine 1 to lysine 72.

The protein belongs to the IF-1 family. In terms of assembly, component of the 30S ribosomal translation pre-initiation complex which assembles on the 30S ribosome in the order IF-2 and IF-3, IF-1 and N-formylmethionyl-tRNA(fMet); mRNA recruitment can occur at any time during PIC assembly.

Its subcellular location is the cytoplasm. In terms of biological role, one of the essential components for the initiation of protein synthesis. Stabilizes the binding of IF-2 and IF-3 on the 30S subunit to which N-formylmethionyl-tRNA(fMet) subsequently binds. Helps modulate mRNA selection, yielding the 30S pre-initiation complex (PIC). Upon addition of the 50S ribosomal subunit IF-1, IF-2 and IF-3 are released leaving the mature 70S translation initiation complex. This chain is Translation initiation factor IF-1, found in Staphylococcus aureus (strain USA300 / TCH1516).